We begin with the raw amino-acid sequence, 255 residues long: Small ribosomal subunit protein uS2 (255 aa).

The disordered stretch occupies residues 226-255 (QGVSNEEVAAEQNIDLDEKEKSEETEATEE).

This sequence belongs to the universal ribosomal protein uS2 family.

This is Small ribosomal subunit protein uS2 from Staphylococcus aureus (strain JH1).